We begin with the raw amino-acid sequence, 136 residues long: Ribonuclease YqgF (136 aa).

It belongs to the YqgF nuclease family. As to quaternary structure, monomer; also forms low amounts of dimers. Mn(2+) is required as a cofactor.

The protein resides in the cytoplasm. Its function is as follows. Has robust sequence-specific RNase activity, acting as a 5'-3' exo/endonuclease on ssRNA substrates with minimally 3 consecutive adenine bases. Has no detectable nuclease activity on dsRNA, dsDNA or Holliday junction DNA. This Deinococcus radiodurans (strain ATCC 13939 / DSM 20539 / JCM 16871 / CCUG 27074 / LMG 4051 / NBRC 15346 / NCIMB 9279 / VKM B-1422 / R1) protein is Ribonuclease YqgF.